Here is a 173-residue protein sequence, read N- to C-terminus: CKLF-like MARVEL transmembrane domain-containing protein 8 (173 aa).

In terms of domain architecture, MARVEL spans Phe36 to Arg168. A run of 4 helical transmembrane segments spans residues Leu40–Ala60, Phe70–Ile90, Thr105–Val125, and Phe147–Trp167.

The protein belongs to the chemokine-like factor family.

It localises to the membrane. In Bos taurus (Bovine), this protein is CKLF-like MARVEL transmembrane domain-containing protein 8 (CMTM8).